Here is a 748-residue protein sequence, read N- to C-terminus: Cytosolic phospholipase A2 (748 aa).

The tract at residues 1 to 178 (MSFIDPYQHI…MRKLLGPKKS (178 aa)) is phospholipid binding. The residue at position 2 (serine 2) is a Phosphoserine. In terms of domain architecture, C2 spans 6–122 (PYQHIIVEHQ…KVGEKKEVPF (117 aa)). Ca(2+) contacts are provided by aspartate 40, threonine 41, aspartate 43, asparagine 65, aspartate 93, alanine 94, and asparagine 95. In terms of domain architecture, PLA2c spans 138-739 (VCSSPDLRFS…SNVEARRFFN (602 aa)). The active-site Nucleophile is serine 228. Threonine 268 bears the Phosphothreonine mark. Residues 428–458 (HIVSNDSSDSDDESQEPKGTEGEDAEREYQN) form a disordered region. 3 positions are modified to phosphoserine: serine 434, serine 435, and serine 437. Over residues 442–458 (QEPKGTEGEDAEREYQN) the composition is skewed to basic and acidic residues. Position 505 is a phosphoserine; by MAPK (serine 505). Phosphoserine is present on serine 514. Lysine 540 is covalently cross-linked (Glycyl lysine isopeptide (Lys-Gly) (interchain with G-Cter in SUMO2)). The active-site Proton acceptor is the aspartate 548. Lysine 605 participates in a covalent cross-link: Glycyl lysine isopeptide (Lys-Gly) (interchain with G-Cter in SUMO2). Phosphoserine occurs at positions 726 and 728.

As to quaternary structure, interacts with KAT5. Post-translationally, phosphorylated at both Ser-505 and Ser-726 in response to mitogenic stimuli.

It is found in the cytoplasm. The protein localises to the golgi apparatus membrane. Its subcellular location is the nucleus envelope. The enzyme catalyses a 1,2-diacyl-sn-glycero-3-phosphocholine + H2O = a 1-acyl-sn-glycero-3-phosphocholine + a fatty acid + H(+). The catalysed reaction is a 1-O-alkyl-2-acyl-sn-glycero-3-phosphocholine + H2O = a 1-O-alkyl-sn-glycero-3-phosphocholine + a fatty acid + H(+). It carries out the reaction a 1-acyl-sn-glycero-3-phosphocholine + H2O = sn-glycerol 3-phosphocholine + a fatty acid + H(+). It catalyses the reaction 1-hexadecanoyl-2-(5Z,8Z,11Z,14Z-eicosatetraenoyl)-sn-glycero-3-phosphocholine + H2O = 1-hexadecanoyl-sn-glycero-3-phosphocholine + (5Z,8Z,11Z,14Z)-eicosatetraenoate + H(+). The enzyme catalyses 1,2-di-(5Z,8Z,11Z,14Z-eicosatetraenoyl)-sn-glycero-3-phosphocholine + H2O = 1-(5Z,8Z,11Z,14Z-eicosatetraenoyl)-sn-glycero-3-phosphocholine + (5Z,8Z,11Z,14Z)-eicosatetraenoate + H(+). The catalysed reaction is 1-octadecanoyl-2-(5Z,8Z,11Z,14Z-eicosatetraenoyl)-sn-glycero-3-phosphocholine + H2O = 1-octadecanoyl-sn-glycero-3-phosphocholine + (5Z,8Z,11Z,14Z)-eicosatetraenoate + H(+). It carries out the reaction 1-hexadecanoyl-2-(9Z,12Z-octadecadienoyl)-sn-glycero-3-phosphocholine + H2O = (9Z,12Z)-octadecadienoate + 1-hexadecanoyl-sn-glycero-3-phosphocholine + H(+). It catalyses the reaction 1-octadecanoyl-2-(9Z,12Z,15Z-octadecatrienoyl)-sn-glycero-3-phosphocholine + H2O = (9Z,12Z,15Z)-octadecatrienoate + 1-octadecanoyl-sn-glycero-3-phosphocholine + H(+). The enzyme catalyses 1-(5Z,8Z,11Z,14Z-eicosatetraenoyl)-2-hexadecanoyl-sn-glycero-3-phosphocholine + H2O = 1-(5Z,8Z,11Z,14Z-eicosatetraenoyl)-sn-glycero-3-phosphocholine + hexadecanoate + H(+). The catalysed reaction is 1-O-hexadecyl-2-(5Z,8Z,11Z,14Z)-eicosatetraenoyl-sn-glycero-3-phosphocholine + H2O = 1-O-hexadecyl-sn-glycero-3-phosphocholine + (5Z,8Z,11Z,14Z)-eicosatetraenoate + H(+). It carries out the reaction 1,2-di-(9Z-octadecenoyl)-sn-glycero-3-phospho-(1'-sn-glycerol) + H2O = 1-(9Z-octadecenoyl)-sn-glycero-3-phospho-(1'-sn-glycerol) + (9Z)-octadecenoate + H(+). It catalyses the reaction 1-octadecanoyl-2-(5Z,8Z,11Z,14Z-eicosatetraenoyl)-sn-glycero-3-phosphate + H2O = 1-octadecanoyl-sn-glycero-3-phosphate + (5Z,8Z,11Z,14Z)-eicosatetraenoate + H(+). The enzyme catalyses 1-hexadecanoyl-sn-glycero-3-phosphocholine + H2O = sn-glycerol 3-phosphocholine + hexadecanoate + H(+). The catalysed reaction is 2-(prostaglandin E2)-sn-glycero-3-phosphoethanolamine + H2O = sn-glycero-3-phosphoethanolamine + prostaglandin E2 + H(+). It carries out the reaction 2-[(15S)-hydroxy-(5Z,8Z,11Z,13E)-eicosatetraenoyl]-sn-glycero-3-phosphocholine + H2O = (15S)-hydroxy-(5Z,8Z,11Z,13E)-eicosatetraenoate + sn-glycerol 3-phosphocholine + H(+). It catalyses the reaction 2-[(15R)-hydroxy-(5Z,8Z,11Z,13E)-eicosatetraenoyl]-sn-glycero-3-phosphocholine + H2O = (15R)-hydroxy-(5Z,8Z,11Z,13E)-eicosatetraenoate + sn-glycerol 3-phosphocholine + H(+). The enzyme catalyses 2-(prostaglandin E2)-sn-glycero-3-phosphocholine + H2O = prostaglandin E2 + sn-glycerol 3-phosphocholine + H(+). The catalysed reaction is 2-[(11R)-hydroxy-(5Z,8Z,12E,14Z)-eicosatetraenoyl]-sn-glycero-3-phosphocholine + H2O = (11R)-hydroxy-(5Z,8Z,12E,14Z)-eicosatetraenoate + sn-glycerol 3-phosphocholine + H(+). It carries out the reaction 1-(5Z,8Z,11Z,14Z-eicosatetraenoyl)-2-O-hexadecyl-sn-glycero-3-phosphocholine + H2O = 2-O-hexadecyl-sn-glycero-3-phosphocholine + (5Z,8Z,11Z,14Z)-eicosatetraenoate + H(+). It catalyses the reaction 1-octadecanoyl-2-(5Z,8Z,11Z,14Z-eicosatetraenoyl)-sn-glycero-3-phosphocholine + glycerol = 1-(5Z,8Z,11Z,14Z-eicosatetraenoyl)-glycerol + 1-octadecanoyl-sn-glycero-3-phosphocholine. The enzyme catalyses 1-octadecanoyl-2-(9Z,12Z,15Z-octadecatrienoyl)-sn-glycero-3-phosphocholine + glycerol = 1-(9Z,12Z,15Z-octadecatrienoyl)-glycerol + 1-octadecanoyl-sn-glycero-3-phosphocholine. It functions in the pathway membrane lipid metabolism; glycerophospholipid metabolism. Its pathway is lipid metabolism; arachidonate metabolism. The protein operates within lipid metabolism; prostaglandin biosynthesis. It participates in lipid metabolism; leukotriene B4 biosynthesis. Its activity is regulated as follows. Activated by cytosolic calcium, which is necessary for binding to membrane lipids. Activated by phosphorylation in response to mitogenic stimuli. Functionally, has primarily calcium-dependent phospholipase and lysophospholipase activities, with a major role in membrane lipid remodeling and biosynthesis of lipid mediators of the inflammatory response. Plays an important role in embryo implantation and parturition through its ability to trigger prostanoid production. Preferentially hydrolyzes the ester bond of the fatty acyl group attached at sn-2 position of phospholipids (phospholipase A2 activity). Selectively hydrolyzes sn-2 arachidonoyl group from membrane phospholipids, providing the precursor for eicosanoid biosynthesis via the cyclooxygenase pathway. In an alternative pathway of eicosanoid biosynthesis, hydrolyzes sn-2 fatty acyl chain of eicosanoid lysophopholipids to release free bioactive eicosanoids. Hydrolyzes the ester bond of the fatty acyl group attached at sn-1 position of phospholipids (phospholipase A1 activity) only if an ether linkage rather than an ester linkage is present at the sn-2 position. This hydrolysis is not stereospecific. Has calcium-independent phospholipase A2 and lysophospholipase activities in the presence of phosphoinositides. Has O-acyltransferase activity. Catalyzes the transfer of fatty acyl chains from phospholipids to a primary hydroxyl group of glycerol (sn-1 or sn-3), potentially contributing to monoacylglycerol synthesis. The protein is Cytosolic phospholipase A2 (PLA2G4A) of Oryctolagus cuniculus (Rabbit).